The sequence spans 350 residues: Dauer larva development regulatory growth factor daf-7 (350 aa).

The first 21 residues, Met-1–Thr-21, serve as a signal peptide directing secretion. The propeptide occupies Phe-22–Arg-234. Asn-23 carries N-linked (GlcNAc...) asparagine glycosylation. Intrachain disulfides connect Cys-241–Cys-251, Cys-250–Cys-315, Cys-278–Cys-347, and Cys-282–Cys-349.

Belongs to the TGF-beta family. As to expression, expressed in the chemosensory neurons, including in the ASJ neurons in males. Expressed in the ASI neurons.

It is found in the secreted. Under harsh environmental conditions, larvae enter a developmentally arrested state known as dauer; TGF-beta-like daf-7 acts to inhibit dauer larva formation and promote growth. May be a ligand to cell surface receptor daf-4. May act as a negative regulator of dauer larva development by transducing chemosensory information from ASI neurons. Involved in sensitivity to CO2 levels. Involved in mate searching behavior of males, acting in concert with the neuropeptide pdf-1. In AWC neurons, acts to promote expression of srsx-3, a member of the GPCR family. The chain is Dauer larva development regulatory growth factor daf-7 from Caenorhabditis elegans.